The primary structure comprises 876 residues: Alanine--tRNA ligase (876 aa).

Zn(2+) is bound by residues His-565, His-569, Cys-667, and His-671.

This sequence belongs to the class-II aminoacyl-tRNA synthetase family. Zn(2+) is required as a cofactor.

It is found in the cytoplasm. It carries out the reaction tRNA(Ala) + L-alanine + ATP = L-alanyl-tRNA(Ala) + AMP + diphosphate. In terms of biological role, catalyzes the attachment of alanine to tRNA(Ala) in a two-step reaction: alanine is first activated by ATP to form Ala-AMP and then transferred to the acceptor end of tRNA(Ala). Also edits incorrectly charged Ser-tRNA(Ala) and Gly-tRNA(Ala) via its editing domain. The chain is Alanine--tRNA ligase from Staphylococcus aureus (strain Mu3 / ATCC 700698).